The following is a 467-amino-acid chain: Stromal membrane-associated protein 1 (467 aa).

One can recognise an Arf-GAP domain in the interval 18-136; it reads QLILSKLLRE…KYYDKNAIAI (119 aa). The C4-type zinc-finger motif lies at 33-56; it reads CADCEAKGPRWASWNIGVFICIRC. Residues 145–155 show a composition bias toward polar residues; that stretch reads PLQPLVSSPSL. Disordered stretches follow at residues 145 to 224 and 408 to 467; these read PLQP…LDGP and KFGL…QLWK. 2 stretches are compositionally biased toward basic and acidic residues: residues 160–185 and 192–204; these read DKNKLEKEKEKKKEEKKREKEPEKPA and KLQKKDQQLEPKK. An Interaction with clathrin heavy chains motif is present at residues 218 to 222; sequence LLGLD. The span at 413-438 shows a compositional bias: polar residues; sequence QAQQPQWSLSQMNQQMAGMSISSATP. Over residues 446-467 the composition is skewed to low complexity; that stretch reads SSTTAGWSGSSSGQTLSTQLWK.

As to quaternary structure, interacts with ARF6. Interacts with clathrin heavy chains via the clathrin box-like motif. Detected in bone marrow, adrenal gland, trachea, lymph node, spinal cord, peripheral blood leukocytes, thyroid and stomach.

It localises to the cell membrane. Its function is as follows. GTPase activating protein that acts on ARF6. Plays a role in clathrin-dependent endocytosis. May play a role in erythropoiesis. The protein is Stromal membrane-associated protein 1 (SMAP1) of Homo sapiens (Human).